We begin with the raw amino-acid sequence, 317 residues long: Beta-ketoacyl-[acyl-carrier-protein] synthase III (317 aa).

Active-site residues include C112 and H244. An ACP-binding region spans residues 245–249 (QANLR). The active site involves N274.

This sequence belongs to the thiolase-like superfamily. FabH family. Homodimer.

The protein resides in the cytoplasm. It carries out the reaction malonyl-[ACP] + acetyl-CoA + H(+) = 3-oxobutanoyl-[ACP] + CO2 + CoA. It participates in lipid metabolism; fatty acid biosynthesis. Functionally, catalyzes the condensation reaction of fatty acid synthesis by the addition to an acyl acceptor of two carbons from malonyl-ACP. Catalyzes the first condensation reaction which initiates fatty acid synthesis and may therefore play a role in governing the total rate of fatty acid production. Possesses both acetoacetyl-ACP synthase and acetyl transacylase activities. Its substrate specificity determines the biosynthesis of branched-chain and/or straight-chain of fatty acids. This is Beta-ketoacyl-[acyl-carrier-protein] synthase III from Salmonella paratyphi B (strain ATCC BAA-1250 / SPB7).